We begin with the raw amino-acid sequence, 369 residues long: L-lactate oxidase (369 aa).

The region spanning 13 to 369 (EKKLNVLNLD…KNAKLLNIRY (357 aa)) is the FMN hydroxy acid dehydrogenase domain. Tyr-39 serves as a coordination point for pyruvate. FMN-binding positions include 92–94 (PAA), Ser-121, and Gln-143. Tyr-145 contributes to the pyruvate binding site. Thr-171 provides a ligand contact to FMN. Arg-180 contributes to the pyruvate binding site. Lys-240 and Ser-262 together coordinate FMN. Residues His-264 and Arg-267 each coordinate pyruvate. His-264 (proton acceptor) is an active-site residue. FMN contacts are provided by residues 295–299 (DSGIR) and Arg-319.

The protein belongs to the FMN-dependent alpha-hydroxy acid dehydrogenase family. Homotetramer. It depends on FMN as a cofactor.

It catalyses the reaction (S)-lactate + O2 = pyruvate + H2O2. Its function is as follows. Catalyzes the oxidation of (S)-lactate (L-lactate) to pyruvate, with a reduction of O2 to H2O2. May be involved in the utilization of L-lactate as an energy source for growth. The polypeptide is L-lactate oxidase (Lentilactobacillus hilgardii (strain ATCC 8290 / DSM 20176 / CCUG 30140 / JCM 1155 / KCTC 3500 / NBRC 15886 / NCIMB 8040 / NRRL B-1843 / 9)).